Here is a 270-residue protein sequence, read N- to C-terminus: Chromo domain-containing protein cec-4 (270 aa).

2 disordered regions span residues methionine 1 to lysine 24 and lysine 143 to valine 229. The Chromo domain occupies tyrosine 87–threonine 147. 2 stretches are compositionally biased toward basic residues: residues threonine 151–alanine 167 and threonine 187–arginine 197. The segment covering leucine 205–valine 229 has biased composition (basic and acidic residues).

In terms of assembly, interacts with mono-, di- and tri-methylated 'Lys-9' residues on histone H3. Weakly interacts with methylated 'Lys-37' residues on histone H3.

It is found in the nucleus inner membrane. It localises to the membrane. Its function is as follows. Chromatin anchor protein which binds to methylated lysine residues on histone H3, thereby recruiting heterochromatin to the nuclear periphery, especially in embryonic cells, with a lesser role in differentiated cells. May be required for the correct positioning of chromatin and nucleoli in embryos. The protein is Chromo domain-containing protein cec-4 of Caenorhabditis elegans.